Here is a 1160-residue protein sequence, read N- to C-terminus: MSEPRFVHLRVHSDYSMIDGLAKTAPLVKKAAALGMPALAITDFTNLCGLVKFYGAGHGAGIKPIVGADFNVQCDLLGDELTHLTVLAANNTGYQNLTLLISKAYQRGYGAAGPIIDRDWLIELNEGLILLSGGRMGDVGRSLLRGNSALVDECVAFYEEHFPDRYFLELIRTGRPDEESYLHAAVELAEARGLPVVATNDVRFIDSSDFDAHEIRVAIHDGFTLDDPKRPRNYSPQQYMRSEEEMCELFADIPEALANTVEIAKRCNVTVRLGEYFLPQFPTGDMSTEDYLVKRAKEGLEERLAFLFPDEEERLKRRPEYDERLETELQVINQMGFPGYFLIVMEFIQWSKDNGVPVGPGRGSGAGSLVAYALKITDLDPLEFDLLFERFLNPERVSMPDFDVDFCMEKRDQVIEHVADMYGRDAVSQIITFGTMAAKAVIRDVGRVLGHPYGFVDRISKLIPPDPGMTLAKAFEAEPQLPEIYEADEEVKALIDMARKLEGVTRNAGKHAGGVVIAPTKITDFAPLYCDEEGKHPVTQFDKSDVEYAGLVKFDFLGLRTLTIINWALEMINKRRAKNGEPPLDIAAIPLDDKKSFDMLQRSETTAVFQLESRGMKDLIKRLQPDCFEDMIALVALFRPGPLQSGMVDNFIDRKHGREEISYPDVQWQHESLKPVLEPTYGIILYQEQVMQIAQVLSGYTLGGADMLRRAMGKKKPEEMAKQRSVFAEGAEKNGINAELAMKIFDLVEKFAGYGFNKSHSAAYALVSYQTLWLKAHYPAEFMAAVMTADMDNTEKVVGLVDECWRMGLKILPPDINSGLYHFHVNDDGEIVYGIGAIKGVGEGPIEAIIEARNKGGYFRELFDLCARTDTKKLNRRVLEKLIMSGAFDRLGPHRAALMNSLGDALKAADQHAKAEAIGQADMFGVLAEEPEQIEQSYASCQPWPEQVVLDGERETLGLYLTGHPINQYLKEIERYVGGVRLKDMHPTERGKVITAAGLVVAARVMVTKRGNRIGICTLDDRSGRLEVMLFTDALDKYQQLLEKDRILIVSGQVSFDDFSGGLKMTAREVMDIDEAREKYARGLAISLTDRQIDDQLLNRLRQSLEPHRSGTIPVHLYYQRADARARLRFGATWRVSPSDRLLNDLRGLIGSEQVELEFD.

The protein belongs to the DNA polymerase type-C family. DnaE subfamily. The DNA polymerase III holoenzyme complex contains at least 10 different subunits organized into 3 functionally essential subassemblies: the Pol III core, the beta sliding clamp processivity factor and the clamp-loading complex. The Pol III core (subunits alpha, epsilon and theta) contains the polymerase and the 3'-5' exonuclease proofreading activities. The polymerase is tethered to the template via the dimeric beta sliding clamp processivity factor. The clamp loader (also called gamma complex) assembles the beta sliding clamp onto the primed template and plays a central role in the organization and communication at the replication fork. The clamp-loading complex contains delta, delta', psi and chi, and 3 copies of either or both of two different DnaX proteins, gamma and tau. The DNA replisome complex has a single clamp loader (3 tau and 1 each of delta, delta', psi and chi subunits) which binds 3 Pol III cores (1 core on the leading strand and 2 on the lagging strand) each with a beta sliding clamp dimer. Additional proteins in the replisome are other copies of gamma, psi and chi, Ssb, DNA helicase and RNA primase. Interacts with the beta sliding-clamp subunit via the peptide Gln-Ala-Asp-Met-Phe (residues 920-924).

It localises to the cytoplasm. It catalyses the reaction DNA(n) + a 2'-deoxyribonucleoside 5'-triphosphate = DNA(n+1) + diphosphate. In terms of biological role, DNA polymerase III is a complex, multichain enzyme responsible for most of the replicative synthesis in bacteria. This DNA polymerase also exhibits 3' to 5' exonuclease activity. The alpha chain is the DNA polymerase catalytic subunit. It is tethered to replicating DNA by the beta sliding clamp (dnaN), which confers extremely high processivity to the catalytic subunit, copying a 5.4 kb genome in 11 seconds, a speed of at least 500 nucleotides/second at 30 degrees Celsius. This is DNA polymerase III subunit alpha (dnaE) from Escherichia coli (strain K12).